The chain runs to 405 residues: Accessory Sec system protein translocase subunit SecY2 (405 aa).

The next 10 helical transmembrane spans lie at 14–34, 63–83, 104–124, 131–151, 156–176, 191–211, 247–267, 285–305, 343–363, and 368–388; these read LFTL…LPFV, LSIF…WQMF, MYLT…RLPV, ILVV…LVWL, ASMG…LNIP, GIIV…ALMY, MYVM…GFIF, PLWV…FAFV, FSVI…LFVL, and LLRL…IFTI.

Belongs to the SecY/SEC61-alpha family. SecY2 subfamily. In terms of assembly, component of the accessory SecA2/SecY2 protein translocase complex required to export cell wall proteins. May form heterotrimers with SecE and SecG subunits.

The protein resides in the cell membrane. Functionally, part of the accessory SecA2/SecY2 system specifically required for export of possible cell wall proteins. The central subunit of a protein translocation channel. The polypeptide is Accessory Sec system protein translocase subunit SecY2 (Streptococcus pneumoniae (strain CGSP14)).